The primary structure comprises 224 residues: Phosphoribosylformylglycinamidine synthase subunit PurQ (224 aa).

The Glutamine amidotransferase type-1 domain occupies 1–224; that stretch reads MIAIIKFPGT…ILLRRLGEWA (224 aa). Cys84 serves as the catalytic Nucleophile. Catalysis depends on residues His196 and Glu198.

As to quaternary structure, part of the FGAM synthase complex composed of 1 PurL, 1 PurQ and 2 PurS subunits.

It localises to the cytoplasm. The enzyme catalyses N(2)-formyl-N(1)-(5-phospho-beta-D-ribosyl)glycinamide + L-glutamine + ATP + H2O = 2-formamido-N(1)-(5-O-phospho-beta-D-ribosyl)acetamidine + L-glutamate + ADP + phosphate + H(+). It catalyses the reaction L-glutamine + H2O = L-glutamate + NH4(+). The protein operates within purine metabolism; IMP biosynthesis via de novo pathway; 5-amino-1-(5-phospho-D-ribosyl)imidazole from N(2)-formyl-N(1)-(5-phospho-D-ribosyl)glycinamide: step 1/2. Its function is as follows. Part of the phosphoribosylformylglycinamidine synthase complex involved in the purines biosynthetic pathway. Catalyzes the ATP-dependent conversion of formylglycinamide ribonucleotide (FGAR) and glutamine to yield formylglycinamidine ribonucleotide (FGAM) and glutamate. The FGAM synthase complex is composed of three subunits. PurQ produces an ammonia molecule by converting glutamine to glutamate. PurL transfers the ammonia molecule to FGAR to form FGAM in an ATP-dependent manner. PurS interacts with PurQ and PurL and is thought to assist in the transfer of the ammonia molecule from PurQ to PurL. This is Phosphoribosylformylglycinamidine synthase subunit PurQ from Saccharolobus solfataricus (strain ATCC 35092 / DSM 1617 / JCM 11322 / P2) (Sulfolobus solfataricus).